The chain runs to 108 residues: L-rhamnose mutarotase (108 aa).

Tyr-18 lines the substrate pocket. His-22 acts as the Proton donor in catalysis. Residues Tyr-41 and 76-77 (WW) contribute to the substrate site.

Belongs to the rhamnose mutarotase family. As to quaternary structure, homodimer.

The protein resides in the cytoplasm. It carries out the reaction alpha-L-rhamnose = beta-L-rhamnose. The protein operates within carbohydrate metabolism; L-rhamnose metabolism. Functionally, involved in the anomeric conversion of L-rhamnose. The chain is L-rhamnose mutarotase from Paraburkholderia phymatum (strain DSM 17167 / CIP 108236 / LMG 21445 / STM815) (Burkholderia phymatum).